We begin with the raw amino-acid sequence, 334 residues long: Non-functional pseudokinase ZED1 (334 aa).

In terms of domain architecture, Protein kinase spans 49–334 (FSESRIISSW…KELKLIEKLS (286 aa)). ATP-binding positions include 55-63 (ISSWGYFIW) and lysine 76. Residues threonine 125 and threonine 177 each carry the O-acetylthreonine modification.

The protein belongs to the protein kinase superfamily. Ser/Thr protein kinase family. ZRK subfamily. Interacts with RPP13L4/ZAR1. Component of an immune signaling complex made of, at least, SZE1, BKN2/SZE2, ZAR1 and ZED1. Binds directly to SZE1 at the plasma membrane. In terms of tissue distribution, expressed in seedlings, young leaves, floral organs, shoot apical meristems (SAM) and inflorescence stems.

The protein localises to the cytoplasm. Its subcellular location is the cytosol. It localises to the nucleus. The protein resides in the cell membrane. Together with RPP13L4/ZAR1, involved in the ambient temperature (above 22 degrees Celsius)-sensitive aerial organ development. Together with RPP13L4/ZAR1, involved in the regulation of the ambient temperature-sensitive intersection of growth and immune response in the absence of pathogens, by repressing the transcription of SNC1. Probable non-functional kinase required for recognition of the Pseudomonas syringae type III effector HopZ1a by RPP13L4/ZAR1 and, together with SZE1 and SZE2, to trigger subsequent defense responses. May function as a decoy to trap HopZ1a in the ZAR1 complex for recognition by the plant immune system. The chain is Non-functional pseudokinase ZED1 from Arabidopsis thaliana (Mouse-ear cress).